The sequence spans 153 residues: TM2 domain-containing protein DDB_G0277895 (153 aa).

Residues 3–50 (QKSVCVTYLLWLFFGLFGIHRFYLNRPCSGVLYLFTCGCFFIGWFIDI) form the TM2 domain. The next 2 membrane-spanning stretches (helical) occupy residues 6-26 (VCVT…RFYL) and 33-53 (VLYL…ICLI). The segment at 85-153 (GSPQQQPYGA…GNYPPPYGPQ (69 aa)) is disordered. 6 consecutive repeat copies span residues 89 to 96 (QQPYGAPP), 97 to 104 (QQPYGAPP), 105 to 112 (QQPYGAPP), 113 to 120 (QQPYGAPP), 121 to 128 (QQPYGAPP), and 129 to 136 (PQPYGAPP). The tract at residues 89–136 (QQPYGAPPQQPYGAPPQQPYGAPPQQPYGAPPQQPYGAPPPQPYGAPP) is 6 X 8 AA tandem repeat of Q-Q-P-Y-G-A-P-P. The span at 93 to 153 (GAPPQQPYGA…GNYPPPYGPQ (61 aa)) shows a compositional bias: pro residues.

It belongs to the TM2 family.

The protein localises to the membrane. This is TM2 domain-containing protein DDB_G0277895 from Dictyostelium discoideum (Social amoeba).